The sequence spans 296 residues: Acetyl-coenzyme A carboxylase carboxyl transferase subunit beta (296 aa).

One can recognise a CoA carboxyltransferase N-terminal domain in the interval 25–294; sequence VWTKCTACEQ…PFVEPELISE (270 aa). The Zn(2+) site is built by C29, C32, C48, and C51. The C4-type zinc-finger motif lies at 29-51; it reads CTACEQVLYSEELKRNLYVCPKC.

This sequence belongs to the AccD/PCCB family. As to quaternary structure, acetyl-CoA carboxylase is a heterohexamer composed of biotin carboxyl carrier protein (AccB), biotin carboxylase (AccC) and two subunits each of ACCase subunit alpha (AccA) and ACCase subunit beta (AccD). It depends on Zn(2+) as a cofactor.

The protein resides in the cytoplasm. The enzyme catalyses N(6)-carboxybiotinyl-L-lysyl-[protein] + acetyl-CoA = N(6)-biotinyl-L-lysyl-[protein] + malonyl-CoA. It functions in the pathway lipid metabolism; malonyl-CoA biosynthesis; malonyl-CoA from acetyl-CoA: step 1/1. Its function is as follows. Component of the acetyl coenzyme A carboxylase (ACC) complex. Biotin carboxylase (BC) catalyzes the carboxylation of biotin on its carrier protein (BCCP) and then the CO(2) group is transferred by the transcarboxylase to acetyl-CoA to form malonyl-CoA. The chain is Acetyl-coenzyme A carboxylase carboxyl transferase subunit beta from Haemophilus influenzae (strain 86-028NP).